The primary structure comprises 236 residues: Phosphoribosylaminoimidazole-succinocarboxamide synthase (236 aa).

This sequence belongs to the SAICAR synthetase family.

The enzyme catalyses 5-amino-1-(5-phospho-D-ribosyl)imidazole-4-carboxylate + L-aspartate + ATP = (2S)-2-[5-amino-1-(5-phospho-beta-D-ribosyl)imidazole-4-carboxamido]succinate + ADP + phosphate + 2 H(+). It functions in the pathway purine metabolism; IMP biosynthesis via de novo pathway; 5-amino-1-(5-phospho-D-ribosyl)imidazole-4-carboxamide from 5-amino-1-(5-phospho-D-ribosyl)imidazole-4-carboxylate: step 1/2. This Rickettsia felis (strain ATCC VR-1525 / URRWXCal2) (Rickettsia azadi) protein is Phosphoribosylaminoimidazole-succinocarboxamide synthase.